Consider the following 1850-residue polypeptide: Voltage-dependent L-type calcium channel subunit alpha-1S (1850 aa).

The disordered stretch occupies residues 1-23 (MEPSSPQDEGLRKKQPKKPVPEI). Residues 1-51 (MEPSSPQDEGLRKKQPKKPVPEILPRPPRALFCLTLQNPLRKACISVVEWK) lie on the Cytoplasmic side of the membrane. One copy of the I repeat lies at 38–337 (NPLRKACISV…LVLGVLSGEF (300 aa)). The chain crosses the membrane as a helical span at residues 52 to 70 (PFETIILLTIFANCVALAV). Residues 71-85 (YLPMPEDDNNTLNLG) are Extracellular-facing. A helical transmembrane segment spans residues 86–106 (LEKLEYFFLIVFSIEAAMKII). Over 107-115 (AYGFLFHQD) the chain is Cytoplasmic. A helical membrane pass occupies residues 116 to 136 (AYLRSGWNVLDFIIVFLGVFT). Over 137–160 (AILEQVNIIQTNTAPMSSKGAGLD) the chain is Extracellular. Residues 161 to 179 (VKALRAFRVLRPLRLVSGV) traverse the membrane as a helical segment. At 180-196 (PSLQVVLNSIFKAMLPL) the chain is on the cytoplasmic side. A helical membrane pass occupies residues 197-218 (FHIALLVLFMVIIYAIIGLELF). The Extracellular segment spans residues 219-279 (KGKMHKTCYF…HGITHFDNFG (61 aa)). 2 disulfides stabilise this stretch: Cys226–Cys254 and Cys245–Cys261. The segment at residues 280–301 (FSMLTVYQCISMEGWTDVLYWV) is an intramembrane region (pore-forming). A Selectivity filter of repeat I motif is present at residues 290–293 (SMEG). Glu292 serves as a coordination point for Ca(2+). The Extracellular segment spans residues 302–309 (NDAIGNEW). A helical membrane pass occupies residues 310 to 330 (PWIYFVTLILLGSFFILNLVL). Topologically, residues 331-432 (GVLSGEFTKE…WKCHDLVKSK (102 aa)) are cytoplasmic. Residues 357–374 (QQLEEDLRGYMSWITQGE) are binding to the beta subunit. 2 positions are modified to phosphoserine: Ser393 and Ser397. The stretch at 418–664 (NRVFRWKCHD…VFLAIAVDNL (247 aa)) is one II repeat. A helical transmembrane segment spans residues 433-451 (VFYWLVILIVALNTLSIAS). The Extracellular segment spans residues 452-462 (EHHNQPLWLTH). The helical transmembrane segment at 463–483 (LQDVANRVLLALFTIEMLMKM) threads the bilayer. Over 484-494 (YGLGLRQYFMS) the chain is Cytoplasmic. Residues 495 to 514 (IFNRFDCFVVCSGILEILLV) form a helical membrane-spanning segment. The Extracellular portion of the chain corresponds to 515 to 523 (ESGAMTPLG). The chain crosses the membrane as a helical span at residues 524–542 (ISVLRCIRLLRLFKITKYW). At 543–561 (TSLSNLVASLLNSIRSIAS) the chain is on the cytoplasmic side. Residues 562-581 (LLLLLFLFMIIFALLGMQLF) traverse the membrane as a helical segment. At 582–601 (GGRYDFEDTEVRRSNFDNFP) the chain is on the extracellular side. Residues 602–623 (QALISVFQVLTGEDWNSVMYNG) constitute an intramembrane region (pore-forming). Residues 612 to 615 (TGED) carry the Selectivity filter of repeat II motif. Glu614 is a binding site for Ca(2+). At 624 to 633 (IMAYGGPSYP) the chain is on the extracellular side. Residues 634–653 (GVLVCIYFIILFVCGNYILL) form a helical membrane-spanning segment. The Cytoplasmic portion of the chain corresponds to 654–799 (NVFLAIAVDN…VLCHRIVNAT (146 aa)). Disordered regions lie at residues 673–717 (AQKA…IPTT) and 731–758 (EVKDPYPSADFPGDDEEDEPEIPASPRP). The residue at position 687 (Ser687) is a Phosphoserine; by PKA. The span at 690–711 (LPDKSEEERSTMTKKLEQKPKG) shows a compositional bias: basic and acidic residues. The segment covering 742-751 (PGDDEEDEPE) has biased composition (acidic residues). An III repeat occupies 786–1068 (NKIRVLCHRI…IFVGFVIVTF (283 aa)). Residues 800-818 (WFTNFILLFILLSSAALAA) traverse the membrane as a helical segment. At 819–830 (EDPIRADSMRNQ) the chain is on the extracellular side. A helical membrane pass occupies residues 831–850 (ILEYFDYVFTAVFTVEIVLK). Over 851-866 (MTTYGAFLHKGSFCRN) the chain is Cytoplasmic. Residues 867-885 (YFNILDLLVVAVSLISMGL) traverse the membrane as a helical segment. Topologically, residues 886–892 (ESSAISV) are extracellular. The chain crosses the membrane as a helical span at residues 893-911 (VKILRVLRVLRPLRAINRA). Over 912-930 (KGLKHVVQCVFVAIRTIGN) the chain is Cytoplasmic. A helical transmembrane segment spans residues 931-950 (IVLVTTLLQFMFACIGVQLF). At 951–1000 (KGKFYSCNDLSKMTEEECRGYYYIYKDGDPTQIELRPRQWIHNDFHFDNV) the chain is on the extracellular side. Cys957 and Cys968 are joined by a disulfide. A dihydropyridine binding region spans residues 988–1077 (RQWIHNDFHF…FQEQGETEYK (90 aa)). The segment at residues 1001–1021 (LSAMMSLFTVSTFEGWPQLLY) is an intramembrane region (pore-forming). The Selectivity filter of repeat III motif lies at 1012-1015 (TFEG). Ca(2+) is bound at residue Glu1014. The Extracellular portion of the chain corresponds to 1022–1038 (KAIDSNEEDTGPVYNNR). The helical transmembrane segment at 1039–1060 (VEMAIFFIIYIILIAFFMMNIF) threads the bilayer. The Cytoplasmic portion of the chain corresponds to 1061-1118 (VGFVIVTFQEQGETEYKNCELDKNQRQCVQYALKARPLRCYIPKNPYQYQVWYVVTSS). One copy of the IV repeat lies at 1105-1384 (NPYQYQVWYV…LFVAVIMDNF (280 aa)). Residues 1119–1140 (YFEYLMFALIMLNTICLGMQHY) traverse the membrane as a helical segment. N-linked (GlcNAc...) asparagine glycosylation is present at Asn1141. The Extracellular segment spans residues 1141–1148 (NQSEQMNH). A helical transmembrane segment spans residues 1149–1170 (ISDILNVAFTIIFTLEMILKLI). Topologically, residues 1171 to 1180 (AFKPRGYFGD) are cytoplasmic. A helical transmembrane segment spans residues 1181–1200 (PWNVFDFLIVIGSIIDVILS). Over 1201-1231 (EIDTLLASSGGLYCLGGGCGNVDPDESARIS) the chain is Extracellular. A helical transmembrane segment spans residues 1232–1250 (SAFFRLFRVMRLIKLLSRA). Residues 1251 to 1268 (EGVRTLLWTFIKSFQALP) lie on the Cytoplasmic side of the membrane. The chain crosses the membrane as a helical span at residues 1269–1289 (YVALLIVMLFFIYAVIGMQMF). Over 1290-1311 (GKIAMVDGTQINRNNNFQTFPQ) the chain is Extracellular. The segment at residues 1312–1330 (AVLLLFRCATGEAWQEILL) is an intramembrane region (pore-forming). Residues 1321-1324 (TGEA) carry the Selectivity filter of repeat IV motif. Residues 1331–1356 (ACSYGKRCDPESDYAPGEEYACGTNF) lie on the Extracellular side of the membrane. The interval 1337 to 1403 (RCDPESDYAP…LGPHHLDEFK (67 aa)) is dihydropyridine binding. A disulfide bond links Cys1338 and Cys1352. The interval 1349-1391 (EYACGTNFAYYYFISFYMLCAFLIINLFVAVIMDNFDYLTRDW) is phenylalkylamine binding. The helical transmembrane segment at 1357 to 1381 (AYYYFISFYMLCAFLIINLFVAVIM) threads the bilayer. Residues 1382–1850 (DNFDYLTRDW…PKGGAMPREP (469 aa)) lie on the Cytoplasmic side of the membrane. Residues 1522–1542 (KFYATFLIQEHFRKFMKRQEE) form an interaction with calmodulin region. Ser1575 bears the Phosphoserine; by PKA and CAMK2 mark. Position 1579 is a phosphothreonine (Thr1579). Position 1617 is a phosphoserine; by PKA (Ser1617). Positions 1697-1779 (PVTREGPFSQ…FEERVPRNSA (83 aa)) are disordered. Residues 1706–1716 (QPCSVSGVNSR) are compositionally biased toward polar residues. Basic and acidic residues-rich tracts occupy residues 1717-1726 (SHVDKLERQM) and 1745-1756 (QEKHPVHEEGKG).

The protein belongs to the calcium channel alpha-1 subunit (TC 1.A.1.11) family. CACNA1S subfamily. Component of a calcium channel complex consisting of a pore-forming alpha subunit (CACNA1S) and the ancillary subunits CACNB1 or CACNB2, CACNG1 and CACNA2D1. The channel complex contains alpha, beta, gamma and delta subunits in a 1:1:1:1 ratio, i.e. it contains either CACNB1 or CACNB2. CACNA1S channel activity is modulated by the auxiliary subunits (CACNB1 or CACNB2, CACNG1 and CACNA2D1). Interacts with DYSF and JSRP1. Interacts with RYR1. Interacts with STAC, STAC2 and STAC3 (via their SH3 domains). Interacts with CALM. The alpha-1S subunit is found in two isoforms in the skeletal muscle: a minor form of 212 kDa containing the complete amino acid sequence, and a major form of 190 kDa derived from the full-length form by post-translational proteolysis close to Phe-1690. Post-translationally, phosphorylated. Phosphorylation by PKA activates the calcium channel. Both the minor and major forms are phosphorylated in vitro by PKA. Phosphorylation at Ser-1575 is involved in beta-adrenergic-mediated regulation of the channel. In terms of tissue distribution, skeletal muscle specific.

The protein localises to the cell membrane. It is found in the sarcolemma. The protein resides in the T-tubule. The catalysed reaction is Ca(2+)(in) = Ca(2+)(out). Channel activity is blocked by dihydropyridines (DHP), phenylalkylamines, and by benzothiazepines. In terms of biological role, pore-forming, alpha-1S subunit of the voltage-gated calcium channel that gives rise to L-type calcium currents in skeletal muscle. Calcium channels containing the alpha-1S subunit play an important role in excitation-contraction coupling in skeletal muscle via their interaction with RYR1, which triggers Ca(2+) release from the sarcplasmic reticulum and ultimately results in muscle contraction. Long-lasting (L-type) calcium channels belong to the 'high-voltage activated' (HVA) group. The protein is Voltage-dependent L-type calcium channel subunit alpha-1S (Cacna1s) of Rattus norvegicus (Rat).